A 434-amino-acid polypeptide reads, in one-letter code: L-2-hydroxyglutarate dehydrogenase, mitochondrial (434 aa).

This sequence belongs to the L2HGDH family. Requires FAD as cofactor.

It localises to the mitochondrion. The enzyme catalyses (S)-2-hydroxyglutarate + A = 2-oxoglutarate + AH2. This chain is L-2-hydroxyglutarate dehydrogenase, mitochondrial, found in Caenorhabditis briggsae.